We begin with the raw amino-acid sequence, 288 residues long: NH(3)-dependent NAD(+) synthetase (288 aa).

46–53 (GISGGQDS) is a binding site for ATP. Residue D52 coordinates Mg(2+). R153 contributes to the deamido-NAD(+) binding site. ATP is bound at residue T173. A Mg(2+)-binding site is contributed by E178. Deamido-NAD(+) contacts are provided by K186 and D193. ATP contacts are provided by K202 and T224. 273-274 (HK) lines the deamido-NAD(+) pocket.

The protein belongs to the NAD synthetase family. Homodimer.

The catalysed reaction is deamido-NAD(+) + NH4(+) + ATP = AMP + diphosphate + NAD(+) + H(+). Its pathway is cofactor biosynthesis; NAD(+) biosynthesis; NAD(+) from deamido-NAD(+) (ammonia route): step 1/1. Functionally, catalyzes the ATP-dependent amidation of deamido-NAD to form NAD. Uses ammonia as a nitrogen source. This chain is NH(3)-dependent NAD(+) synthetase, found in Deinococcus geothermalis (strain DSM 11300 / CIP 105573 / AG-3a).